A 391-amino-acid polypeptide reads, in one-letter code: Multidrug resistance protein MdtL (391 aa).

The Cytoplasmic segment spans residues 1–3 (MSR). A helical membrane pass occupies residues 4–24 (FLICSFALVLLYPAGIDMYLV). Residues 25-41 (GLPRIAADLNASEAQLH) are Periplasmic-facing. A helical transmembrane segment spans residues 42 to 62 (IAFSVYLAGMAAAMLFAGKVA). At 63-68 (DRSGRK) the chain is on the cytoplasmic side. The helical transmembrane segment at 69-89 (PVAIPGAALFIIASVFCSLAE) threads the bilayer. The Periplasmic portion of the chain corresponds to 90-92 (TSA). A helical transmembrane segment spans residues 93-113 (LFLAGRFLQGLGAGCCYVVAF). Topologically, residues 114–130 (AILRDTLDDRRRAKVLS) are cytoplasmic. The chain crosses the membrane as a helical span at residues 131–151 (LLNGITCIIPVLAPVLGHLIM). Over 152-157 (LKFPWQ) the chain is Periplasmic. A helical membrane pass occupies residues 158-178 (SLFWTMATMGIAVLMLSLFIL). Residues 179 to 202 (KETRPAAPAASDKPRENSESLLNR) lie on the Cytoplasmic side of the membrane. The chain crosses the membrane as a helical span at residues 203–222 (FFLSRVVITTLSVSVILTFV). Residues 223-244 (NTSPVLLMEIMGFERGEYATIM) are Periplasmic-facing. The chain crosses the membrane as a helical span at residues 245-265 (ALTAGVSMTVSFSTPFALGIF). The Cytoplasmic segment spans residues 266–268 (KPR). The helical transmembrane segment at 269–289 (TLMITSQVLFLAAGITLAVSP) threads the bilayer. The Periplasmic segment spans residues 290-292 (SHA). A helical transmembrane segment spans residues 293–313 (VSLFGITLICAGFSVGFGVAM). At 314–330 (SQALGPFSLRAGVASST) the chain is on the cytoplasmic side. A helical transmembrane segment spans residues 331 to 351 (LGIAQVCGSSLWIWLAAVVGI). Over 352–355 (GAWN) the chain is Periplasmic. The helical transmembrane segment at 356 to 376 (MLIGILIACSIVSLLLIMFVA) threads the bilayer. The Cytoplasmic portion of the chain corresponds to 377 to 391 (PGRPVAAHEEIHHHA).

It belongs to the major facilitator superfamily. DHA1 family. MdtL (TC 2.A.1.2.22) subfamily.

The protein resides in the cell inner membrane. Functionally, confers resistance to chloramphenicol. The polypeptide is Multidrug resistance protein MdtL (Escherichia coli O6:K15:H31 (strain 536 / UPEC)).